Reading from the N-terminus, the 566-residue chain is Ubiquitin carboxyl-terminal hydrolase 21 (566 aa).

Composition is skewed to basic and acidic residues over residues 1–14 (MPQASEHRLGRTRE) and 58–70 (PPDERLKKLELGR). Disordered regions lie at residues 1–103 (MPQA…LPLP) and 146–169 (PEPPTLRRSTSLRRLGGFPGPPTL). Composition is skewed to low complexity over residues 71 to 81 (GRTSGSRPRGP) and 151 to 160 (LRRSTSLRRL). The Nuclear export signal motif lies at 134-152 (ELGAALSRLALRPEPPTLR). The region spanning 212–559 (VGLRNLGNTC…EGYVLFYQLM (348 aa)) is the USP domain. Cys-221 serves as the catalytic Nucleophile. The segment at 324-349 (APPILASGPVPSPPRRGGGALHEEPE) is disordered. The Zn(2+) site is built by Cys-385, Cys-388, Cys-438, and Cys-441. His-519 serves as the catalytic Proton acceptor.

The protein belongs to the peptidase C19 family. USP21 subfamily. Interacts with BEND3.

The protein resides in the cytoplasm. Its subcellular location is the nucleus. It catalyses the reaction Thiol-dependent hydrolysis of ester, thioester, amide, peptide and isopeptide bonds formed by the C-terminal Gly of ubiquitin (a 76-residue protein attached to proteins as an intracellular targeting signal).. Its function is as follows. Deubiquitinates histone H2A, a specific tag for epigenetic transcriptional repression, thereby acting as a coactivator. Deubiquitination of histone H2A releaves the repression of di- and trimethylation of histone H3 at 'Lys-4', resulting in regulation of transcriptional initiation. Regulates gene expression via histone H2A deubiquitination. Deubiquitinates BAZ2A/TIP5 leading to its stabilization. Also capable of removing NEDD8 from NEDD8 conjugates but has no effect on Sentrin-1 conjugates. Also acts as a negative regulator of the ribosome quality control (RQC) by mediating deubiquitination of 40S ribosomal proteins RPS10/eS10 and RPS20/uS10, thereby antagonizing ZNF598-mediated 40S ubiquitination. The sequence is that of Ubiquitin carboxyl-terminal hydrolase 21 from Mus musculus (Mouse).